The following is a 611-amino-acid chain: Chaperone protein HtpG (611 aa).

The segment at Met1–Arg326 is a; substrate-binding. The b stretch occupies residues Glu327–Arg536. The tract at residues Leu537–Ala611 is c.

The protein belongs to the heat shock protein 90 family. As to quaternary structure, homodimer.

The protein localises to the cytoplasm. Its function is as follows. Molecular chaperone. Has ATPase activity. This Methylobacterium sp. (strain 4-46) protein is Chaperone protein HtpG.